The chain runs to 257 residues: Cyclin-C1-1 (257 aa).

This sequence belongs to the cyclin family. Cyclin C subfamily.

The protein is Cyclin-C1-1 of Oryza sativa subsp. japonica (Rice).